A 37-amino-acid chain; its full sequence is Omega-sparatoxin-Hv1a (37 aa).

Disulfide bonds link cysteine 4–cysteine 18, cysteine 11–cysteine 23, and cysteine 17–cysteine 33.

In terms of tissue distribution, expressed by the venom gland.

The protein resides in the secreted. Its function is as follows. Blocks calcium channels (Cav). The protein is Omega-sparatoxin-Hv1a of Heteropoda venatoria (Brown huntsman spider).